The primary structure comprises 290 residues: 4-hydroxy-tetrahydrodipicolinate synthase (290 aa).

Thr-44 provides a ligand contact to pyruvate. Tyr-132 serves as the catalytic Proton donor/acceptor. The Schiff-base intermediate with substrate role is filled by Lys-160. Ile-202 is a pyruvate binding site.

This sequence belongs to the DapA family. As to quaternary structure, homotetramer; dimer of dimers.

The protein resides in the cytoplasm. It carries out the reaction L-aspartate 4-semialdehyde + pyruvate = (2S,4S)-4-hydroxy-2,3,4,5-tetrahydrodipicolinate + H2O + H(+). It functions in the pathway amino-acid biosynthesis; L-lysine biosynthesis via DAP pathway; (S)-tetrahydrodipicolinate from L-aspartate: step 3/4. Catalyzes the condensation of (S)-aspartate-beta-semialdehyde [(S)-ASA] and pyruvate to 4-hydroxy-tetrahydrodipicolinate (HTPA). This chain is 4-hydroxy-tetrahydrodipicolinate synthase, found in Geobacter sp. (strain M21).